The chain runs to 586 residues: Actin-related protein 9 (586 aa).

Positions 141–169 (STPIVDKDADVDPLQRSTPDDTEPNSEEN) are disordered.

It belongs to the actin family. ARP8 subfamily.

The protein is Actin-related protein 9 (ARP9) of Oryza sativa subsp. japonica (Rice).